The sequence spans 66 residues: uncharacterized protein (66 aa).

This is an uncharacterized protein from Vertebrata (FPV).